A 351-amino-acid polypeptide reads, in one-letter code: Probable cobalt-factor III C(17)-methyltransferase (351 aa).

This sequence belongs to the precorrin methyltransferase family.

It carries out the reaction Co(II)-factor III + S-adenosyl-L-methionine + H(+) = Co(II)-factor IV + S-adenosyl-L-homocysteine. The protein operates within cofactor biosynthesis; adenosylcobalamin biosynthesis; cob(II)yrinate a,c-diamide from sirohydrochlorin (anaerobic route): step 3/10. Functionally, methyltransferase that likely catalyzes the ring contraction and methylation of C-17 in cobalt-factor III to form cobalt-factor IV. May also convert cobalt-precorrin-3 to cobalt-precorrin-4. This Methanothermobacter thermautotrophicus (strain ATCC 29096 / DSM 1053 / JCM 10044 / NBRC 100330 / Delta H) (Methanobacterium thermoautotrophicum) protein is Probable cobalt-factor III C(17)-methyltransferase (cbiH).